The following is a 333-amino-acid chain: Ribosomal RNA small subunit methyltransferase H (333 aa).

S-adenosyl-L-methionine-binding positions include 36-38 (GGY), Asp54, Phe81, Asp102, and Gln109.

Belongs to the methyltransferase superfamily. RsmH family.

The protein localises to the cytoplasm. It catalyses the reaction cytidine(1402) in 16S rRNA + S-adenosyl-L-methionine = N(4)-methylcytidine(1402) in 16S rRNA + S-adenosyl-L-homocysteine + H(+). In terms of biological role, specifically methylates the N4 position of cytidine in position 1402 (C1402) of 16S rRNA. The protein is Ribosomal RNA small subunit methyltransferase H of Afipia carboxidovorans (strain ATCC 49405 / DSM 1227 / KCTC 32145 / OM5) (Oligotropha carboxidovorans).